A 504-amino-acid chain; its full sequence is MIITILIAIFVIIYVRKNISQAKIAEAEAKSKKIIIDSEKNAEAIKKEAILEAKEEVHRIRNDFEKESRERRNEIQRLERRIIQREELLDKKSEAIENKEEVLNKKQQDINEKAASIDELYDKQREELEKLSNLSSDEARELLLEETKKEIRHDLAVMIKEMENKAKEEADKKAKEIISTAIQRCAADHVAESTVHVVSLPNDEMKGRIIGREGRNIRALETLTGVDLIIDDTPEAVILSGFDPIRRQVARIALEKLIIDGRIHPARIEEMVEKAKQEVENDIKEEGEQATFETGVHGLHQELVKLLGRLKYRTSYGQNVLKHSMEVAYLAGLMASELGMDPTLAKRSGLLHDIGKAVDHEIEGPHALIGSEMAKKYHESSVVVNAIAAHHGDVEYESIEAILVQAADAISAARPGARRETLEAYIKRLEKLEEIANSYEGVEKSYAIQAGREVRIMVKPEDIDDYGCIEMSKNIVKRIESELEYPGQIKVNIIREVRAVEYAK.

Positions T194–V279 constitute a KH domain. Positions V320–A413 constitute an HD domain.

This sequence belongs to the RNase Y family.

Functionally, endoribonuclease that initiates mRNA decay. In Clostridium novyi (strain NT), this protein is Ribonuclease Y.